Here is a 273-residue protein sequence, read N- to C-terminus: Hydroxyethylthiazole kinase (273 aa).

Methionine 49 is a substrate binding site. Lysine 125 and threonine 171 together coordinate ATP. Glycine 198 serves as a coordination point for substrate.

This sequence belongs to the Thz kinase family. Mg(2+) serves as cofactor.

It catalyses the reaction 5-(2-hydroxyethyl)-4-methylthiazole + ATP = 4-methyl-5-(2-phosphooxyethyl)-thiazole + ADP + H(+). Its pathway is cofactor biosynthesis; thiamine diphosphate biosynthesis; 4-methyl-5-(2-phosphoethyl)-thiazole from 5-(2-hydroxyethyl)-4-methylthiazole: step 1/1. Its function is as follows. Catalyzes the phosphorylation of the hydroxyl group of 4-methyl-5-beta-hydroxyethylthiazole (THZ). This Natranaerobius thermophilus (strain ATCC BAA-1301 / DSM 18059 / JW/NM-WN-LF) protein is Hydroxyethylthiazole kinase.